The sequence spans 380 residues: Cytochrome b (380 aa).

4 helical membrane passes run 33–53 (FGSL…FLAM), 77–98 (WLIR…FLHV), 113–133 (WNMG…GYVL), and 178–198 (FFAF…VHLL). Residues His-83 and His-97 each coordinate heme b. Residues His-182 and His-196 each contribute to the heme b site. His-201 serves as a coordination point for a ubiquinone. The next 4 membrane-spanning stretches (helical) occupy residues 226–246 (IKDF…TLFF), 288–308 (LGGV…PLLH), 320–340 (ITQI…WIGG), and 347–367 (FITI…IFMP).

Belongs to the cytochrome b family. In terms of assembly, the cytochrome bc1 complex contains 11 subunits: 3 respiratory subunits (MT-CYB, CYC1 and UQCRFS1), 2 core proteins (UQCRC1 and UQCRC2) and 6 low-molecular weight proteins (UQCRH/QCR6, UQCRB/QCR7, UQCRQ/QCR8, UQCR10/QCR9, UQCR11/QCR10 and a cleavage product of UQCRFS1). This cytochrome bc1 complex then forms a dimer. The cofactor is heme b.

It is found in the mitochondrion inner membrane. In terms of biological role, component of the ubiquinol-cytochrome c reductase complex (complex III or cytochrome b-c1 complex) that is part of the mitochondrial respiratory chain. The b-c1 complex mediates electron transfer from ubiquinol to cytochrome c. Contributes to the generation of a proton gradient across the mitochondrial membrane that is then used for ATP synthesis. This is Cytochrome b (MT-CYB) from Microtus oregoni (Creeping vole).